A 398-amino-acid polypeptide reads, in one-letter code: Succinyl-diaminopimelate desuccinylase (398 aa).

His68 provides a ligand contact to Zn(2+). Asp70 is a catalytic residue. Residue Asp101 participates in Zn(2+) binding. Glu135 acts as the Proton acceptor in catalysis. 3 residues coordinate Zn(2+): Glu136, Glu164, and His349.

It belongs to the peptidase M20A family. DapE subfamily. As to quaternary structure, homodimer. Zn(2+) is required as a cofactor. Requires Co(2+) as cofactor.

The enzyme catalyses N-succinyl-(2S,6S)-2,6-diaminopimelate + H2O = (2S,6S)-2,6-diaminopimelate + succinate. The protein operates within amino-acid biosynthesis; L-lysine biosynthesis via DAP pathway; LL-2,6-diaminopimelate from (S)-tetrahydrodipicolinate (succinylase route): step 3/3. Catalyzes the hydrolysis of N-succinyl-L,L-diaminopimelic acid (SDAP), forming succinate and LL-2,6-diaminopimelate (DAP), an intermediate involved in the bacterial biosynthesis of lysine and meso-diaminopimelic acid, an essential component of bacterial cell walls. The protein is Succinyl-diaminopimelate desuccinylase of Wolbachia pipientis wMel.